The sequence spans 331 residues: Nucleotide sugar transporter SLC35B4 (331 aa).

11 helical membrane passes run 4–24, 30–50, 59–79, 92–112, 124–144, 153–173, 201–221, 229–249, 251–267, 268–288, and 294–314; these read AFAV…LELL, GCGN…GFLF, PAIP…VSVV, LHMI…IIIL, IALV…QVTV, GFQA…ALLM, ALPL…VVLF, VPVI…NVVT, YVCI…CTSL, TVTL…ILYF, and MWHW…TEVW. Positions 326–331 match the Mediates endoplasmic reticulum retention motif; the sequence is KDDKKD.

It belongs to the nucleotide-sugar transporter family. SLC35B subfamily.

The protein localises to the endoplasmic reticulum membrane. The enzyme catalyses UDP-N-acetyl-alpha-D-glucosamine(in) + UDP-alpha-D-glucuronate(out) = UDP-N-acetyl-alpha-D-glucosamine(out) + UDP-alpha-D-glucuronate(in). It catalyses the reaction UDP-alpha-D-xylose(in) + UDP-alpha-D-glucuronate(out) = UDP-alpha-D-xylose(out) + UDP-alpha-D-glucuronate(in). Antiporter that transports nucleotide sugars across the endoplasmic reticulum (ER) membrane in exchange for another nucleotide sugar. May couple UDP-alpha-D-glucuronate (UDP-GlcA) or UDP-alpha-D-xylose (UDP-Xyl) efflux to UDP-alpha-D-glucuronate (UDP-GlcA) influx into the ER lumen, which in turn stimulates glucuronidation and excretion of endobiotics and xenobiotics. The chain is Nucleotide sugar transporter SLC35B4 (Slc35b4) from Mus musculus (Mouse).